The chain runs to 91 residues: Small ribosomal subunit protein bS20 (91 aa).

This sequence belongs to the bacterial ribosomal protein bS20 family.

Its function is as follows. Binds directly to 16S ribosomal RNA. This is Small ribosomal subunit protein bS20 from Caulobacter vibrioides (strain ATCC 19089 / CIP 103742 / CB 15) (Caulobacter crescentus).